The primary structure comprises 129 residues: Small ribosomal subunit protein uS11 (129 aa).

The protein belongs to the universal ribosomal protein uS11 family. In terms of assembly, part of the 30S ribosomal subunit. Interacts with proteins S7 and S18. Binds to IF-3.

Its function is as follows. Located on the platform of the 30S subunit, it bridges several disparate RNA helices of the 16S rRNA. Forms part of the Shine-Dalgarno cleft in the 70S ribosome. The chain is Small ribosomal subunit protein uS11 from Erythrobacter litoralis (strain HTCC2594).